The primary structure comprises 42 residues: Large ribosomal subunit protein bL36 (42 aa).

This sequence belongs to the bacterial ribosomal protein bL36 family.

The polypeptide is Large ribosomal subunit protein bL36 (Wolbachia pipientis subsp. Culex pipiens (strain wPip)).